A 177-amino-acid chain; its full sequence is Putative zinc finger protein 826 (177 aa).

The C2H2-type 1; degenerate zinc-finger motif lies at 99-114; sequence KTFTWSSSPHKHRRTH. The C2H2-type 2; degenerate zinc finger occupies 120–142; that stretch reads YKCEECGKAFTASSTLSEYKTIH. Residues 148 to 170 form a C2H2-type 3 zinc finger; it reads CKCEECGKAFNWSSDFNKHKRIH.

The protein resides in the nucleus. In terms of biological role, may be involved in transcriptional regulation. This Homo sapiens (Human) protein is Putative zinc finger protein 826 (ZNF826P).